Consider the following 173-residue polypeptide: Large ribosomal subunit protein uL10 (173 aa).

This sequence belongs to the universal ribosomal protein uL10 family. Part of the ribosomal stalk of the 50S ribosomal subunit. The N-terminus interacts with L11 and the large rRNA to form the base of the stalk. The C-terminus forms an elongated spine to which L12 dimers bind in a sequential fashion forming a multimeric L10(L12)X complex.

Forms part of the ribosomal stalk, playing a central role in the interaction of the ribosome with GTP-bound translation factors. This Acidithiobacillus ferrooxidans (strain ATCC 23270 / DSM 14882 / CIP 104768 / NCIMB 8455) (Ferrobacillus ferrooxidans (strain ATCC 23270)) protein is Large ribosomal subunit protein uL10.